Here is a 116-residue protein sequence, read N- to C-terminus: Large ribosomal subunit protein bL17 (116 aa).

This sequence belongs to the bacterial ribosomal protein bL17 family. As to quaternary structure, part of the 50S ribosomal subunit. Contacts protein L32.

The protein is Large ribosomal subunit protein bL17 of Helicobacter pylori (strain J99 / ATCC 700824) (Campylobacter pylori J99).